We begin with the raw amino-acid sequence, 337 residues long: MDAFKTHLATVASGAALSREQARAAFDDLLSGEVTPIQAGAFLTALSVRGESEDEIVGAVSAMRARMLPVTAPTGAIDIVGTGGDHSGSYNVSTLAAILTAACGVSVAKHGNRAATSRSGAADVLVALGVKIGLPPEALARCLSEAGLCFMFAQTHHGAMRHVAPVRTELPFRTIFNMLGPLSNPAGVTAQVFGVSRPAWAEPLTRVLATLGSRRVWTVHGSDGLDEITTTGPTAVIALEDGALSHFTIDPREVGLPLATLDDLRGGDPDHNAAALSAVLEGARSAYRDIAVLNAGAGLVVAGAAGTLAEGVARAQGAIDSGAARATLARLVAVSNA.

Residues Gly-81, 84–85 (GD), Ser-89, 91–94 (NVST), 109–117 (KHGNRAATS), and Ala-121 contribute to the 5-phospho-alpha-D-ribose 1-diphosphate site. Gly-81 lines the anthranilate pocket. Ser-93 contributes to the Mg(2+) binding site. Asn-112 contributes to the anthranilate binding site. Position 167 (Arg-167) interacts with anthranilate. Mg(2+) contacts are provided by Asp-226 and Glu-227.

It belongs to the anthranilate phosphoribosyltransferase family. As to quaternary structure, homodimer. The cofactor is Mg(2+).

It carries out the reaction N-(5-phospho-beta-D-ribosyl)anthranilate + diphosphate = 5-phospho-alpha-D-ribose 1-diphosphate + anthranilate. It functions in the pathway amino-acid biosynthesis; L-tryptophan biosynthesis; L-tryptophan from chorismate: step 2/5. Functionally, catalyzes the transfer of the phosphoribosyl group of 5-phosphorylribose-1-pyrophosphate (PRPP) to anthranilate to yield N-(5'-phosphoribosyl)-anthranilate (PRA). The protein is Anthranilate phosphoribosyltransferase of Methylorubrum populi (strain ATCC BAA-705 / NCIMB 13946 / BJ001) (Methylobacterium populi).